Reading from the N-terminus, the 1074-residue chain is MPKRSDIKKVLLIGSGPIQIGQAAEFDFSGSQACKSLREEGVEVVLVNSNPATIMTDPDMADKVYIEPLVPEIVAKIIEKERPDGIIAGIGGQTGLNITSELAEMGVLEKYGVEVLGTKVRSIQEAEDRDLFKKAMERIGEPVPRSIAVTSLEEAEEAMKELGLPLIVRPAYTLGGSGGGVARTHEELMRICEMGLKRSRIHQVLLEESVIGWTEVEYEVMRDSNNTCITICNMENMDPMGIHTGESIVVTPIQTLSDHEIQMLRSAAINIIRALGIEGGCNIQFAVRNGEYRVIEVNPRVSRSSALASKATGYPIARVTAKIAIGLTLDEIRNDVTKETPASFEPTVDYVVIKIPRWPFDKFVKADRTLTTSMKSTGEVMAIGRSYEEALMKAIRSLDIDIDLGYNGKYVPWTDDDVRELLRTPTDERLFAIYQALRRGFSVEEISQLSMIDPYFIERIQNIIRMEDELKNGLTPDRLRRAKKMGFLDSRIAELVGLSREEVTDYRLSLGIIPTYKMVDTCAAEFAASTPYYYSTYDEECELNPSDNKKVLILGSGPIRIGQGIEFDYCTVHAVTALREMGIEAHIINNNPETVSTDYDTSDKLFFEPVTLEDVMNVIEKERYWGVMVQFGGQTAVNLAVPLEKELKRRGLKTVILGTSPDSIDIAEDRERFNKLLNKLGIPQPKAGIAYSPEEAKRVAKEIGYPVLVRPSYVLGGRAMEIVYDESGLELYMREAVRVSHEHPVLIDDFLQNAVEIDVDAVSDGRDVLIGAIMEHIEEAGIHSGDSACMIPPQTLPEDVIATVKDYVRRIALALDVKGIINIQMAYKDGIVYVLEANPRSSRTIPFVSKAVGLPLAKIAAKVMAGNTLREMNLNVEPEIPYVAVKEVLLPFDKLPGADVLLGPEMRSTGEVMGIDYNMGLSFFKAEMSAENNLPLDGIVFISVRDEDKAEIAEVARRFVNAGLKIIATDGTSGYLRGSGVPAERVRKIYHGSPNVLDYIRRGEVKLIINTPTTKQSVKDGFQIRRSAVDYHVPYITTVQAAKAAAEAIEKALRGELTIKALDEYHREVRYRAL.

Residues 1 to 399 are carboxyphosphate synthetic domain; the sequence is MPKRSDIKKV…ALMKAIRSLD (399 aa). Residues arginine 129, arginine 169, glycine 175, glycine 176, glutamate 208, valine 210, glutamate 215, glycine 241, isoleucine 242, histidine 243, glutamine 284, and glutamate 296 each coordinate ATP. Residues 133-325 enclose the ATP-grasp 1 domain; sequence KKAMERIGEP…IARVTAKIAI (193 aa). Residues glutamine 284, glutamate 296, and asparagine 298 each coordinate Mg(2+). Residues glutamine 284, glutamate 296, and asparagine 298 each contribute to the Mn(2+) site. The interval 400–543 is oligomerization domain; that stretch reads IDIDLGYNGK…YSTYDEECEL (144 aa). A carbamoyl phosphate synthetic domain region spans residues 544–933; sequence NPSDNKKVLI…FKAEMSAENN (390 aa). The ATP-grasp 2 domain occupies 674–865; it reads NKLLNKLGIP…LAKIAAKVMA (192 aa). 10 residues coordinate ATP: arginine 710, aspartate 749, leucine 751, glutamate 756, glycine 781, isoleucine 782, histidine 783, serine 784, glutamine 824, and glutamate 836. Residues glutamine 824, glutamate 836, and asparagine 838 each contribute to the Mg(2+) site. Glutamine 824, glutamate 836, and asparagine 838 together coordinate Mn(2+). An MGS-like domain is found at 932–1074; sequence NNLPLDGIVF…YHREVRYRAL (143 aa). Positions 934-1074 are allosteric domain; the sequence is LPLDGIVFIS…YHREVRYRAL (141 aa).

This sequence belongs to the CarB family. In terms of assembly, composed of two chains; the small (or glutamine) chain promotes the hydrolysis of glutamine to ammonia, which is used by the large (or ammonia) chain to synthesize carbamoyl phosphate. Tetramer of heterodimers (alpha,beta)4. It depends on Mg(2+) as a cofactor. Requires Mn(2+) as cofactor.

The catalysed reaction is hydrogencarbonate + L-glutamine + 2 ATP + H2O = carbamoyl phosphate + L-glutamate + 2 ADP + phosphate + 2 H(+). It carries out the reaction hydrogencarbonate + NH4(+) + 2 ATP = carbamoyl phosphate + 2 ADP + phosphate + 2 H(+). Its pathway is amino-acid biosynthesis; L-arginine biosynthesis; carbamoyl phosphate from bicarbonate: step 1/1. It functions in the pathway pyrimidine metabolism; UMP biosynthesis via de novo pathway; (S)-dihydroorotate from bicarbonate: step 1/3. In terms of biological role, large subunit of the glutamine-dependent carbamoyl phosphate synthetase (CPSase). CPSase catalyzes the formation of carbamoyl phosphate from the ammonia moiety of glutamine, carbonate, and phosphate donated by ATP, constituting the first step of 2 biosynthetic pathways, one leading to arginine and/or urea and the other to pyrimidine nucleotides. The large subunit (synthetase) binds the substrates ammonia (free or transferred from glutamine from the small subunit), hydrogencarbonate and ATP and carries out an ATP-coupled ligase reaction, activating hydrogencarbonate by forming carboxy phosphate which reacts with ammonia to form carbamoyl phosphate. The sequence is that of Carbamoyl phosphate synthase large chain from Methanothrix thermoacetophila (strain DSM 6194 / JCM 14653 / NBRC 101360 / PT) (Methanosaeta thermophila).